A 408-amino-acid chain; its full sequence is MASKKFAVKCGNFAVLVDLHILPQGSNKDTSWFSEQKKEEVCLLLKETIDSRVQEYLEVRKQHRPSNAEFTRSNPLSLKGYGFQITAYFLKRGIRLRCIRSTQNAELCVFPDRFVVCVSQLAFSRDLLASQNEDLTERVLHGVSDYFAECAESSLPPSAKLRRNALKEIVKRTETKSSVTSKSQTRRDTVETSSDSVIAEIARRRNDGQASSSPPSESMGQAKDSIKAAESHWGLPVQKLEKVNQTQPEDTSGQQKPHPGERLKTGLLSRSPVCSCESASPCPKQSPRVAKTQQKRRNCSSAEDFDHHGRVSLGSDRLVPREIIVEKSKAVRVLPASELSDPGLLLKQDLAKTTSKEELHVLESLSSRHLMKNNPGQAQQTGLATNTERLSTIQNSPTKKRKKYERGH.

Glycyl lysine isopeptide (Lys-Gly) (interchain with G-Cter in SUMO2) cross-links involve residues Lys-61 and Lys-79. Ser-130 carries the post-translational modification Phosphoserine. Residues Lys-167 and Lys-176 each participate in a glycyl lysine isopeptide (Lys-Gly) (interchain with G-Cter in SUMO2) cross-link. The tract at residues 173–226 is disordered; that stretch reads TETKSSVTSKSQTRRDTVETSSDSVIAEIARRRNDGQASSSPPSESMGQAKDSI. A compositionally biased stretch (polar residues) spans 208–219; that stretch reads GQASSSPPSESM. Ser-213 bears the Phosphoserine mark. Glycyl lysine isopeptide (Lys-Gly) (interchain with G-Cter in SUMO2) cross-links involve residues Lys-239 and Lys-242. The segment covering 243 to 255 has biased composition (polar residues); that stretch reads VNQTQPEDTSGQQ. A disordered region spans residues 243–313; the sequence is VNQTQPEDTS…DFDHHGRVSL (71 aa). Glycyl lysine isopeptide (Lys-Gly) (interchain with G-Cter in SUMO2) cross-links involve residues Lys-256, Lys-291, Lys-347, Lys-356, and Lys-372. The segment at 365–408 is disordered; the sequence is LSSRHLMKNNPGQAQQTGLATNTERLSTIQNSPTKKRKKYERGH. Over residues 374 to 397 the composition is skewed to polar residues; the sequence is NPGQAQQTGLATNTERLSTIQNSP. A Phosphothreonine modification is found at Thr-392. Over residues 398 to 408 the composition is skewed to basic residues; that stretch reads TKKRKKYERGH. A Glycyl lysine isopeptide (Lys-Gly) (interchain with G-Cter in SUMO2) cross-link involves residue Lys-399.

The protein belongs to the SLX4IP family. As to quaternary structure, interacts with SLX4/BTBD12; subunit of different structure-specific endonucleases.

The sequence is that of Protein SLX4IP (SLX4IP) from Homo sapiens (Human).